The sequence spans 515 residues: Spermatogenesis-associated protein 2 (515 aa).

Residues 78 to 150 (ALHCAFSMLE…VYKLKELVES (73 aa)) enclose the PUB domain. A PIM motif motif is present at residues 321 to 338 (TYFSTQDDVDLYTDSEPR). Residues 429-452 (GHQTQGLDRLAPVHSKPKPSTTAT) are disordered.

It belongs to the SPATA2 family. In terms of assembly, interacts (via the PIM motif) with RNF31/HOIP (via the PUB domain); the interaction is direct. Interacts (via the PUB domain) with CYLD; the interaction is direct. In terms of tissue distribution, widely expressed, with highest expression in testis, lung and intestine, and lower expression in brain, heart and spleen. Present at high level in Sertoli cells: expressed from stage I to stage XII of the testis seminiferous epithelium (at protein level).

Its subcellular location is the cytoplasm. The protein localises to the nucleus. Functionally, bridging factor that mediates the recruitment of CYLD to the LUBAC complex, thereby regulating TNF-alpha-induced necroptosis. Acts as a direct binding intermediate that bridges RNF31/HOIP, the catalytic subunit of the LUBAC complex, and the deubiquitinase (CYLD), thereby recruiting CYLD to the TNF-R1 signaling complex (TNF-RSC). Required to activate the 'Met-1'- (linear) and 'Lys-63'-linked deubiquitinase activities of CYLD. Controls the kinase activity of RIPK1 and TNF-alpha-induced necroptosis by promoting 'Met-1'-linked deubiquitination of RIPK1 by CYLD. This is Spermatogenesis-associated protein 2 from Mus musculus (Mouse).